Reading from the N-terminus, the 200-residue chain is Pyridoxamine 5'-phosphate oxidase homolog (200 aa).

FMN is bound by residues F60, K68, and N125.

It belongs to the pyridoxamine 5'-phosphate oxidase family. The cofactor is FMN.

It localises to the cytoplasm. The protein resides in the nucleus. The polypeptide is Pyridoxamine 5'-phosphate oxidase homolog (Saccharomyces cerevisiae (strain ATCC 204508 / S288c) (Baker's yeast)).